A 153-amino-acid polypeptide reads, in one-letter code: uncharacterized protein (153 aa).

The first 25 residues, 1–25, serve as a signal peptide directing secretion; sequence MKKRQYLKSLYVALLGTLCYLSVNA.

This is an uncharacterized protein from Pasteurella multocida (strain Pm70).